The primary structure comprises 379 residues: Probable G-protein coupled receptor 27 (379 aa).

Residues 1–26 (MANASEPGGGGSGGGAEAAALGLRLA) are Extracellular-facing. An N-linked (GlcNAc...) asparagine glycan is attached at asparagine 3. A helical transmembrane segment spans residues 27–47 (TLSLLLCVSLAGNVLFALLIV). At 48–58 (RERSLHRAPYY) the chain is on the cytoplasmic side. The helical transmembrane segment at 59-79 (LLLDLCLADGLRALACLPAVM) threads the bilayer. The Extracellular portion of the chain corresponds to 80-100 (LAARRAAAAAGTPPGALGCKL). An intrachain disulfide couples cysteine 98 to cysteine 175. Residues 101–121 (LAFLAALFCFHAAFLLLGVGV) form a helical membrane-spanning segment. Over 122–142 (TRYLAIAHHRFYAERLAGWPC) the chain is Cytoplasmic. The chain crosses the membrane as a helical span at residues 143–163 (AAMLVCAAWALALAAAFPPVL). Residues 164-185 (DGGGADDEDAPCALEQRPDGAP) lie on the Extracellular side of the membrane. Residues 186–206 (GALGFLLLLAAVVGATHLVYL) traverse the membrane as a helical segment. Residues 207-289 (RLLFFIHDRR…FKTEKRLCKM (83 aa)) are Cytoplasmic-facing. A helical membrane pass occupies residues 290 to 310 (FYAITLLFLLLWGPYVVASYL). The Extracellular portion of the chain corresponds to 311–324 (RVLVRPGAVPQAYL). A helical membrane pass occupies residues 325–345 (TASVWLTFAQAGINPVVCFLF). Over 346 to 379 (NRELRDCFRAQFPCCQSPQATQATLPCDLKGIGL) the chain is Cytoplasmic.

Belongs to the G-protein coupled receptor 1 family.

It is found in the cell membrane. In terms of biological role, orphan receptor. Possible candidate for amine-like G-protein coupled receptor. This Mus musculus (Mouse) protein is Probable G-protein coupled receptor 27 (Gpr27).